Here is a 315-residue protein sequence, read N- to C-terminus: tRNA dimethylallyltransferase (315 aa).

Glycine 13 to threonine 20 serves as a coordination point for ATP. Threonine 15 to threonine 20 contacts substrate. The interaction with substrate tRNA stretch occupies residues aspartate 38 to leucine 41.

This sequence belongs to the IPP transferase family. In terms of assembly, monomer. It depends on Mg(2+) as a cofactor.

The catalysed reaction is adenosine(37) in tRNA + dimethylallyl diphosphate = N(6)-dimethylallyladenosine(37) in tRNA + diphosphate. Catalyzes the transfer of a dimethylallyl group onto the adenine at position 37 in tRNAs that read codons beginning with uridine, leading to the formation of N6-(dimethylallyl)adenosine (i(6)A). This chain is tRNA dimethylallyltransferase, found in Herpetosiphon aurantiacus (strain ATCC 23779 / DSM 785 / 114-95).